Reading from the N-terminus, the 117-residue chain is Large ribosomal subunit protein uL18 (117 aa).

The protein belongs to the universal ribosomal protein uL18 family. As to quaternary structure, part of the 50S ribosomal subunit; part of the 5S rRNA/L5/L18/L25 subcomplex. Contacts the 5S and 23S rRNAs.

Its function is as follows. This is one of the proteins that bind and probably mediate the attachment of the 5S RNA into the large ribosomal subunit, where it forms part of the central protuberance. The chain is Large ribosomal subunit protein uL18 from Edwardsiella ictaluri (strain 93-146).